The following is a 206-amino-acid chain: Dephospho-CoA kinase (206 aa).

Residues 4–200 (TVALTGGIGS…ASYLKLASQF (197 aa)) enclose the DPCK domain. ATP is bound at residue 12-17 (GSGKST).

It belongs to the CoaE family.

It localises to the cytoplasm. The catalysed reaction is 3'-dephospho-CoA + ATP = ADP + CoA + H(+). Its pathway is cofactor biosynthesis; coenzyme A biosynthesis; CoA from (R)-pantothenate: step 5/5. Functionally, catalyzes the phosphorylation of the 3'-hydroxyl group of dephosphocoenzyme A to form coenzyme A. This chain is Dephospho-CoA kinase, found in Salmonella paratyphi A (strain ATCC 9150 / SARB42).